We begin with the raw amino-acid sequence, 36 residues long: uncharacterized protein (36 aa).

Its subcellular location is the mitochondrion. This is an uncharacterized protein from Saccharomyces cerevisiae (strain ATCC 204508 / S288c) (Baker's yeast).